We begin with the raw amino-acid sequence, 340 residues long: Pre-mRNA-splicing factor cwf17 (340 aa).

7 WD repeats span residues glycine 48–glycine 87, glycine 91–lysine 130, glycine 133–threonine 173, glutamate 175–valine 214, glycine 217–arginine 256, glycine 267–leucine 306, and glycine 308–leucine 339.

As to quaternary structure, belongs to the 40S cdc5-associated complex (or cwf complex), a spliceosome sub-complex reminiscent of a late-stage spliceosome composed of the U2, U5 and U6 snRNAs and at least brr2, cdc5, cwf2/prp3, cwf3/syf1, cwf4/syf3, cwf5/ecm2, spp42/cwf6, cwf7/spf27, cwf8, cwf9, cwf10, cwf11, cwf12, prp45/cwf13, cwf14, cwf15, cwf16, cwf17, cwf18, cwf19, cwf20, cwf21, cwf22, cwf23, cwf24, cwf25, cwf26, cyp7/cwf27, cwf28, cwf29/ist3, lea1, msl1, prp5/cwf1, prp10, prp12/sap130, prp17, prp22, sap61, sap62, sap114, sap145, slu7, smb1, smd1, smd3, smf1, smg1 and syf2.

It is found in the nucleus. Involved in mRNA splicing where it associates with cdc5 and the other cwf proteins as part of the spliceosome. This Schizosaccharomyces pombe (strain 972 / ATCC 24843) (Fission yeast) protein is Pre-mRNA-splicing factor cwf17 (cwf17).